A 338-amino-acid polypeptide reads, in one-letter code: Lipoate-protein ligase A (338 aa).

Positions 29 to 216 (PATQRVLFLW…AFFAYYGERV (188 aa)) constitute a BPL/LPL catalytic domain. ATP is bound by residues arginine 71, 76–79 (GAVF), and lysine 134. Lysine 134 contributes to the (R)-lipoate binding site.

It belongs to the LplA family. In terms of assembly, monomer.

The protein localises to the cytoplasm. The enzyme catalyses L-lysyl-[lipoyl-carrier protein] + (R)-lipoate + ATP = N(6)-[(R)-lipoyl]-L-lysyl-[lipoyl-carrier protein] + AMP + diphosphate + H(+). Its pathway is protein modification; protein lipoylation via exogenous pathway; protein N(6)-(lipoyl)lysine from lipoate: step 1/2. It participates in protein modification; protein lipoylation via exogenous pathway; protein N(6)-(lipoyl)lysine from lipoate: step 2/2. Functionally, catalyzes both the ATP-dependent activation of exogenously supplied lipoate to lipoyl-AMP and the transfer of the activated lipoyl onto the lipoyl domains of lipoate-dependent enzymes. The polypeptide is Lipoate-protein ligase A (Cronobacter sakazakii (strain ATCC BAA-894) (Enterobacter sakazakii)).